The following is a 147-amino-acid chain: Large ribosomal subunit protein bL9 (147 aa).

It belongs to the bacterial ribosomal protein bL9 family.

Its function is as follows. Binds to the 23S rRNA. This Citrifermentans bemidjiense (strain ATCC BAA-1014 / DSM 16622 / JCM 12645 / Bem) (Geobacter bemidjiensis) protein is Large ribosomal subunit protein bL9.